We begin with the raw amino-acid sequence, 45 residues long: Photosystem II reaction center protein K (45 aa).

A propeptide spanning residues 1-8 (MTQIFLIG) is cleaved from the precursor. The helical transmembrane segment at 20–40 (IVDVLPIIPVLFLLLAFVWQA) threads the bilayer.

Belongs to the PsbK family. PSII is composed of 1 copy each of membrane proteins PsbA, PsbB, PsbC, PsbD, PsbE, PsbF, PsbH, PsbI, PsbJ, PsbK, PsbL, PsbM, PsbT, PsbX, PsbY, PsbZ, Psb30/Ycf12, at least 3 peripheral proteins of the oxygen-evolving complex and a large number of cofactors. It forms dimeric complexes.

The protein localises to the plastid. It is found in the chloroplast thylakoid membrane. Functionally, one of the components of the core complex of photosystem II (PSII). PSII is a light-driven water:plastoquinone oxidoreductase that uses light energy to abstract electrons from H(2)O, generating O(2) and a proton gradient subsequently used for ATP formation. It consists of a core antenna complex that captures photons, and an electron transfer chain that converts photonic excitation into a charge separation. The protein is Photosystem II reaction center protein K of Ostreococcus tauri.